The chain runs to 508 residues: ATP synthase subunit alpha (508 aa).

G169–T176 provides a ligand contact to ATP.

The protein belongs to the ATPase alpha/beta chains family. In terms of assembly, F-type ATPases have 2 components, CF(1) - the catalytic core - and CF(0) - the membrane proton channel. CF(1) has five subunits: alpha(3), beta(3), gamma(1), delta(1), epsilon(1). CF(0) has three main subunits: a(1), b(2) and c(9-12). The alpha and beta chains form an alternating ring which encloses part of the gamma chain. CF(1) is attached to CF(0) by a central stalk formed by the gamma and epsilon chains, while a peripheral stalk is formed by the delta and b chains.

It localises to the cell inner membrane. The catalysed reaction is ATP + H2O + 4 H(+)(in) = ADP + phosphate + 5 H(+)(out). Produces ATP from ADP in the presence of a proton gradient across the membrane. The alpha chain is a regulatory subunit. This chain is ATP synthase subunit alpha, found in Allorhizobium ampelinum (strain ATCC BAA-846 / DSM 112012 / S4) (Agrobacterium vitis (strain S4)).